Here is a 1871-residue protein sequence, read N- to C-terminus: Girdin (1871 aa).

The Calponin-homology (CH) domain occupies Gln12–Ala132. Residues His196–Glu425 adopt a coiled-coil conformation. Residues Ser233, Ser237, and Ser449 each carry the phosphoserine modification. The stretch at Thr458 to Asp1385 forms a coiled coil. 2 disordered regions span residues Glu816–Arg842 and Arg1010–Gln1035. A Phosphoserine modification is found at Ser1020. A compositionally biased stretch (basic and acidic residues) spans Glu1026–Gln1035. Phosphoserine is present on Ser1387. Residues Arg1390–Lys1408 form a phosphoinositide-binding region. Basic and acidic residues predominate over residues Lys1407 to Lys1416. Disordered stretches follow at residues Lys1407 to Lys1459 and Thr1559 to Asn1601. Position 1417 is a phosphoserine; by PKB/AKT1 (Ser1417). Composition is skewed to polar residues over residues Ser1417 to Gly1430, Val1445 to Lys1459, and Thr1559 to Ser1578. Thr1421 carries the post-translational modification Phosphothreonine. Residues Lys1672–Ser1702 carry the GBA motif. At Thr1673 the chain carries Phosphothreonine. Ser1675 is modified (phosphoserine). Residue Ser1690 is modified to Phosphoserine; by PKC/PRKCQ. The tract at residues Ser1713–Asp1823 is SH2-like; required for interaction with growth factor receptors. At Ser1717 the chain carries Phosphoserine. Residues Ser1736 to Ser1871 form a disordered region. The span at Phe1743–Asp1763 shows a compositional bias: basic and acidic residues. Tyr1765 and Tyr1799 each carry phosphotyrosine. 2 stretches are compositionally biased toward polar residues: residues Ser1787–Tyr1799 and Ser1807–Arg1818. 2 positions are modified to phosphoserine: Ser1820 and Ser1837. Basic and acidic residues predominate over residues Ser1820–Arg1830. A compositionally biased stretch (low complexity) spans Pro1838–Asn1851. Positions Lys1854 to Ser1871 are enriched in basic and acidic residues.

The protein belongs to the CCDC88 family. In terms of assembly, homodimer. Interacts (via GBA motif) with guanine nucleotide-binding protein G(i) alpha subunits GNAI1, GNAI2 and GNAI3. Also interacts (via GNA motif) with guanine nucleotide-binding protein G(s) alpha subunit GNAS. Interaction with G(i) alpha subunits occurs before interaction with GNAS and is regulated by phosphorylation; phosphorylation at Ser-1675 enhances binding to G(i) alpha subunits while phosphorylation at Ser-1690 abolishes G(i) alpha subunit binding, promoting binding to GNAS. Interacts (via C-terminal SH2-like region) with growth factor receptors EGFR, INSR and KDR/VEGFR2 (via their autophosphorylated cytoplasmic tails). Forms a complex with EGFR and GNAI3 which leads to enhanced EGFR signaling and triggering of cell migration; ligand stimulation is required for recruitment of GNAI3 to the complex. Interacts (tyrosine-phosphorylated form) with phosphatidylinositol 3-kinase (PI3K) regulatory subunit PIK3R1/p85a (via SH2 domains); the interaction enables recruitment of PIK3R1 to the EGFR receptor, enhancing PI3K activity and cell migration. Interacts with serine/threonine-protein kinase PRKCQ; the interaction leads to phosphorylation of CCDC88A and inhibition of its guanine nucleotide exchange factor activity. Interacts (via C-terminus) with DISC1; the interaction is direct. Interacts with AKT proteins; the interaction is inhibited in the presence of DISC1. Interacts with AKT1/PKB (via C-terminus). The non-phosphorylated form interacts with phosphatidylinositol 4-phosphate [PI(4)P] and weakly with phosphatidylinositol 3-phosphate [PI(3)P]. Interacts with microtubules. Interacts with actin. Phosphorylation is induced by epidermal growth factor (EGF) in a phosphoinositide 3-kinase (PI3K)-dependent manner. Phosphorylation by AKT1/PKB is necessary for delocalization from the cell membrane and for cell migration. Phosphorylated on tyrosine residues which promotes binding to phosphatidylinositol 3-kinase (PI3K) regulatory subunit PIK3R1/p85a and enhances PI3K activity. Tyrosine-phosphorylated by both receptor and non-receptor tyrosine kinases in vitro. Tyrosine phosphorylation is required for AKT1-dependent phosphorylation of Ser-1417. Phosphorylation at Ser-1690 by PRKCQ disrupts interaction with GNAI3 and inhibits guanine nucleotide exchange factor activity. As to expression, expressed ubiquitously.

It is found in the cell membrane. Its subcellular location is the cytoplasm. The protein resides in the cytosol. It localises to the cytoplasmic vesicle. The protein localises to the cell projection. It is found in the lamellipodium. Its subcellular location is the cytoskeleton. The protein resides in the cilium basal body. It localises to the microtubule organizing center. The protein localises to the centrosome. It is found in the centriole. Its function is as follows. Bifunctional modulator of guanine nucleotide-binding proteins (G proteins). Acts as a non-receptor guanine nucleotide exchange factor which binds to and activates guanine nucleotide-binding protein G(i) alpha subunits. Also acts as a guanine nucleotide dissociation inhibitor for guanine nucleotide-binding protein G(s) subunit alpha GNAS. Essential for cell migration. Interacts in complex with G(i) alpha subunits with the EGFR receptor, retaining EGFR at the cell membrane following ligand stimulation and promoting EGFR signaling which triggers cell migration. Binding to Gi-alpha subunits displaces the beta and gamma subunits from the heterotrimeric G-protein complex which enhances phosphoinositide 3-kinase (PI3K)-dependent phosphorylation and kinase activity of AKT1/PKB. Phosphorylation of AKT1/PKB induces the phosphorylation of downstream effectors GSK3 and FOXO1/FKHR, and regulates DNA replication and cell proliferation. Binds in its tyrosine-phosphorylated form to the phosphatidylinositol 3-kinase (PI3K) regulatory subunit PIK3R1 which enables recruitment of PIK3R1 to the EGFR receptor, enhancing PI3K activity and cell migration. Plays a role as a key modulator of the AKT-mTOR signaling pathway, controlling the tempo of the process of newborn neuron integration during adult neurogenesis, including correct neuron positioning, dendritic development and synapse formation. Inhibition of G(s) subunit alpha GNAS leads to reduced cellular levels of cAMP and suppression of cell proliferation. Essential for the integrity of the actin cytoskeleton. Required for formation of actin stress fibers and lamellipodia. May be involved in membrane sorting in the early endosome. Plays a role in ciliogenesis and cilium morphology and positioning and this may partly be through regulation of the localization of scaffolding protein CROCC/Rootletin. The polypeptide is Girdin (CCDC88A) (Homo sapiens (Human)).